We begin with the raw amino-acid sequence, 166 residues long: Ribosome-binding factor A (166 aa).

The disordered stretch occupies residues 122–166 (LASTAEHAGDADPYRVDTEDDDDDTDGADAEARSDADVRRGPQSG). A compositionally biased stretch (basic and acidic residues) spans 128-138 (HAGDADPYRVD). The span at 139-150 (TEDDDDDTDGAD) shows a compositional bias: acidic residues. Over residues 151-166 (AEARSDADVRRGPQSG) the composition is skewed to basic and acidic residues.

This sequence belongs to the RbfA family. In terms of assembly, monomer. Binds 30S ribosomal subunits, but not 50S ribosomal subunits or 70S ribosomes.

It is found in the cytoplasm. In terms of biological role, one of several proteins that assist in the late maturation steps of the functional core of the 30S ribosomal subunit. Associates with free 30S ribosomal subunits (but not with 30S subunits that are part of 70S ribosomes or polysomes). Required for efficient processing of 16S rRNA. May interact with the 5'-terminal helix region of 16S rRNA. The sequence is that of Ribosome-binding factor A from Saccharopolyspora erythraea (strain ATCC 11635 / DSM 40517 / JCM 4748 / NBRC 13426 / NCIMB 8594 / NRRL 2338).